The sequence spans 111 residues: Entry-fusion complex protein OPG086 (111 aa).

Residues 1 to 21 (MASLLYFILFLLFVCISYYFT) form a helical; Signal-anchor membrane-spanning segment. The Virion surface portion of the chain corresponds to 22–111 (YYPTNKLQAA…TLLPILLLSK (90 aa)).

The protein belongs to the orthopoxvirus OPG086 family. In terms of assembly, interacts with OPG099/L5. Component of the entry fusion complex (EFC) composed of OPG053, OPG076, OPG086, OPG094, OPG095, OPG099, OPG107, OPG143, OPG104, OPG147 and OPG155. Except for OPG095 and OPG053, each of the EFC proteins is required for assembly or stability of the complex. Unglycosylated because produced in viral factories instead of the classic ER -Golgi route.

It is found in the virion membrane. Functionally, component of the entry fusion complex (EFC), which consists of 11 proteins. During cell infection, this complex mediates entry of the virion core into the host cytoplasm by a two-step mechanism consisting of lipid mixing of the viral and cellular membranes and subsequent pore formation. This Variola virus (isolate Human/India/Ind3/1967) (VARV) protein is Entry-fusion complex protein OPG086 (OPG086).